The chain runs to 305 residues: Mas-related G-protein coupled receptor member A7 (305 aa).

At 1 to 17 the chain is on the extracellular side; sequence MDETSPRSIDIESLIPN. A helical transmembrane segment spans residues 18–38; it reads LMIIIFGLVGLTGNAIVLWLL. Residues 39–46 lie on the Cytoplasmic side of the membrane; the sequence is GFCLHRNA. Residues 47–67 form a helical membrane-spanning segment; it reads FLVYILNLALADFLFLLCHFI. The Extracellular portion of the chain corresponds to 68 to 81; sequence NSAMFLLKVPIPNG. Residues 82 to 102 traverse the membrane as a helical segment; it reads IFVYCFYTIKMVLYITGLSML. At 103–129 the chain is on the cytoplasmic side; that stretch reads SAISTERCLSVLCPIWYHCRRPEHTST. A helical transmembrane segment spans residues 130–150; that stretch reads VMCAVIWIFSVLICILKEYFC. Residues 151–167 are Extracellular-facing; it reads DFFGTKLGNYYVCQASN. A helical transmembrane segment spans residues 168–188; it reads FFMGAYLMFLFVVLCLSTLAL. The Cytoplasmic portion of the chain corresponds to 189–211; it reads LARLFCGAEKMKFTRLFVTIMLT. Residues 212-232 form a helical membrane-spanning segment; it reads ILVFLLCGLPWGFFWFLLIWI. Residues 233 to 244 lie on the Extracellular side of the membrane; that stretch reads KGGFSVLDYRLY. Residues 245–265 form a helical membrane-spanning segment; it reads LASIVLTVVNSCANPIIYFFV. The Cytoplasmic segment spans residues 266–305; that stretch reads GSFRHRLKHQTLKMVLQSALQDTPETHENMVEMSRIKAEQ.

Belongs to the G-protein coupled receptor 1 family. Mas subfamily. As to expression, expressed in a subset of sensory neurons that includes nociceptors. Expressed in the subclass of non-peptidergic sensory neurons that are IB4(+) and VR1(-).

It localises to the cell membrane. In terms of biological role, orphan receptor. May be a receptor for RFamide-family neuropeptides such as NPFF and NPAF, which are analgesic in vivo. May regulate nociceptor function and/or development, including the sensation or modulation of pain. In Mus musculus (Mouse), this protein is Mas-related G-protein coupled receptor member A7 (Mrgpra7).